Here is a 358-residue protein sequence, read N- to C-terminus: DNA methyltransferase CcrM (358 aa).

The tract at residues 1–260 (MKFGPETIIH…AKVVPIAPED (260 aa)) is methyltransferase. DNA-binding regions (target strand DNA) lie at residues 31–34 (DPPY) and 39–45 (GGDLLRP). DNA-binding regions (non-target strand DNA) lie at residues 93–94 (YH) and 109–110 (WI). His94 contacts dsDNA. Residues 122–132 (MPNFKGTRFAN) constitute a DNA-binding region (target strand DNA). A DNA-binding region (non-target strand DNA) is located at residues 153 to 157 (YDALK). Residues Gln164 and Arg179 each coordinate dsDNA. Positions 187–193 (KAHPTQK) form a DNA-binding region, target strand DNA. The region spanning 259–355 (EDLDVMGSKR…IDVLRAQVRA (97 aa)) is the RAMA domain. Residues 261 to 270 (LDVMGSKRAE) are linker. Positions 267 and 272 each coordinate dsDNA. A non-specific DNA-binding region spans residues 272-358 (RVPFGTIVEA…LRAQVRAGMN (87 aa)). DNA-binding regions (non-target strand DNA) lie at residues 315–317 (SIH) and 330–332 (NGW). Residue Arg350 coordinates dsDNA.

The protein belongs to the N(4)/N(6)-methyltransferase family. Homodimer. Rapidly degraded by Lon protease prior to cell division.

The enzyme catalyses a 2'-deoxyadenosine in DNA + S-adenosyl-L-methionine = an N(6)-methyl-2'-deoxyadenosine in DNA + S-adenosyl-L-homocysteine + H(+). Functionally, a beta subtype methylase that recognizes the double-stranded sequence 5'-GANTC-3' and methylates non-modifed A-2 on the hemimethylated, post-replicative DNA. Opens a bubble in the DNA at the recognition site, allowing precise recognition of the sequence and ensuring enzyme specificity. Functions only in the predivisional cell. Responsible for 5'-GANTC-3' methylation in the cell; methylation of hemimethylated sites generated after replication fork passage occurs late in the predivisional cell, near completion of chromosome replication but prior to cell division. Contributes to the accurate cell-cycle control of DNA replication and cellular morphology. This chain is DNA methyltransferase CcrM (ccrMIM), found in Caulobacter vibrioides (strain ATCC 19089 / CIP 103742 / CB 15) (Caulobacter crescentus).